The primary structure comprises 511 residues: Cytochrome P450 76C4 (511 aa).

The chain crosses the membrane as a helical span at residues 3 to 23; sequence IISGQALFLLFCFISSCFLIS. C450 lines the heme pocket.

Belongs to the cytochrome P450 family. Heme is required as a cofactor.

Its subcellular location is the membrane. The protein is Cytochrome P450 76C4 (CYP76C4) of Arabidopsis thaliana (Mouse-ear cress).